The following is a 170-amino-acid chain: Neurotensin/neuromedin N (170 aa).

The first 23 residues, 1–23, serve as a signal peptide directing secretion; that stretch reads MMAGMKIQLVCMILLAFSSWSLC.

It belongs to the neurotensin family. In terms of assembly, interacts with NTSR1. Interacts with SORT1. Interacts with SORL1. In terms of processing, neurotensin is cleaved and degraded by Angiotensin-converting enzyme (ACE) and neprilysin (MME).

The protein localises to the secreted. It is found in the cytoplasmic vesicle. Its subcellular location is the secretory vesicle. In terms of biological role, neurotensin may play an endocrine or paracrine role in the regulation of fat metabolism. It causes contraction of smooth muscle. The sequence is that of Neurotensin/neuromedin N (NTS) from Canis lupus familiaris (Dog).